The primary structure comprises 584 residues: N(6)-adenosine-methyltransferase subunit METTL3 (584 aa).

Disordered regions lie at residues 1–65 and 162–221; these read MSDT…EHPP and KADD…SNKV. Residues 187–204 show a composition bias toward polar residues; the sequence is RKSSVSLATASISQLTAS. The Nuclear localization signal motif lies at 213–220; it reads DKKGRSNK. Residues 381 to 382 and aspartate 399 contribute to the S-adenosyl-L-methionine site; that span reads DI. The tract at residues 400 to 414 is gate loop 1; sequence PPWDIHMELPYGTLT. 2 interaction with METTL14 regions span residues 454–458 and 468–484; these read DRVDE and QRIIRTGRTGHWLNHGK. Positions 466–483 are interphase loop; sequence QLQRIIRTGRTGHWLNHG. The segment at 469-482 is positively charged region required for RNA-binding; the sequence is RIIRTGRTGHWLNH. Residues 511 to 519 form a gate loop 2 region; the sequence is VRSTSHKPD. Residues lysine 517, 540-543, and 553-554 each bind S-adenosyl-L-methionine; these read RPHN and NQ.

Belongs to the MT-A70-like family. In terms of assembly, heterodimer; heterodimerizes with mettl14 to form an antiparallel heterodimer that constitutes an active methyltransferase. Component of the WMM complex, a N6-methyltransferase complex composed of a catalytic subcomplex, named MAC, and of an associated subcomplex, named MACOM. The MAC subcomplex is composed of mettl3 and mettl14. In terms of tissue distribution, expressed in the hemato-vascular system: enriched in sorted endothelial cells and haemogenic endothelium.

Its subcellular location is the nucleus. The protein resides in the nucleus speckle. It is found in the cytoplasm. It carries out the reaction an adenosine in mRNA + S-adenosyl-L-methionine = an N(6)-methyladenosine in mRNA + S-adenosyl-L-homocysteine + H(+). Its function is as follows. The METTL3-METTL14 heterodimer forms a N6-methyltransferase complex that methylates adenosine residues at the N(6) position of some RNAs and regulates various processes such as the circadian clock, differentiation of embryonic and hematopoietic stem cells, cortical neurogenesis, response to DNA damage, differentiation of T-cells and primary miRNA processing. In the heterodimer formed with mettl14, mettl3 constitutes the catalytic core. N6-methyladenosine (m6A), which takes place at the 5'-[AG]GAC-3' consensus sites of some mRNAs, plays a role in mRNA stability, processing and translation efficiency. M6A is also involved in hematopoietic stem cells specification: m6A methylation and subsequent destabilization of mRNAs, such as notch1a, leads to decreased Notch signaling, promoting endothelial to hematopoietic transition. M6A also takes place in other RNA molecules, such as primary miRNA (pri-miRNAs). Mediates methylation of pri-miRNAs. This chain is N(6)-adenosine-methyltransferase subunit METTL3, found in Danio rerio (Zebrafish).